Reading from the N-terminus, the 401-residue chain is Mannonate dehydratase (401 aa).

This sequence belongs to the mannonate dehydratase family. Fe(2+) serves as cofactor. Requires Mn(2+) as cofactor.

The enzyme catalyses D-mannonate = 2-dehydro-3-deoxy-D-gluconate + H2O. The protein operates within carbohydrate metabolism; pentose and glucuronate interconversion. Functionally, catalyzes the dehydration of D-mannonate. The polypeptide is Mannonate dehydratase (Brucella canis (strain ATCC 23365 / NCTC 10854 / RM-666)).